The following is a 437-amino-acid chain: UDP-N-acetylmuramoylalanine--D-glutamate ligase (437 aa).

112-118 contacts ATP; sequence GSNGKST.

Belongs to the MurCDEF family.

It is found in the cytoplasm. It catalyses the reaction UDP-N-acetyl-alpha-D-muramoyl-L-alanine + D-glutamate + ATP = UDP-N-acetyl-alpha-D-muramoyl-L-alanyl-D-glutamate + ADP + phosphate + H(+). The protein operates within cell wall biogenesis; peptidoglycan biosynthesis. Cell wall formation. Catalyzes the addition of glutamate to the nucleotide precursor UDP-N-acetylmuramoyl-L-alanine (UMA). The protein is UDP-N-acetylmuramoylalanine--D-glutamate ligase of Haemophilus influenzae (strain PittGG).